A 90-amino-acid polypeptide reads, in one-letter code: Mitochondrial import inner membrane translocase subunit Tim10-B (90 aa).

Positions 29–54 match the Twin CX3C motif motif; sequence CHKKCVPPHYKEAELSKGESVCLDRC. Cystine bridges form between C29-C54 and C33-C50.

Belongs to the small Tim family. As to quaternary structure, heterohexamer; composed of 3 copies of TIMM9 and 3 copies of TIMM10/TIM10A, named soluble 70 kDa complex. The complex forms a 6-bladed alpha-propeller structure and associates with the TIMM22 component of the TIM22 complex. Interacts with multi-pass transmembrane proteins in transit.

Its subcellular location is the mitochondrion inner membrane. Functionally, mitochondrial intermembrane chaperone that participates in the import and insertion of multi-pass transmembrane proteins into the mitochondrial inner membrane. May also be required for the transfer of beta-barrel precursors from the TOM complex to the sorting and assembly machinery (SAM complex) of the outer membrane. Acts as a chaperone-like protein that protects the hydrophobic precursors from aggregation and guide them through the mitochondrial intermembrane space. The polypeptide is Mitochondrial import inner membrane translocase subunit Tim10-B (timm10-b) (Xenopus laevis (African clawed frog)).